The sequence spans 257 residues: S-methyl-5'-thioadenosine phosphorylase (257 aa).

Residues S10 and 50-51 (RH) contribute to the phosphate site. A disulfide bond links C130 and C195. Substrate is bound at residue M180. Phosphate is bound at residue T181. Residue 204–206 (DYD) participates in substrate binding. C246 and C248 are oxidised to a cystine.

The protein belongs to the PNP/MTAP phosphorylase family. MTAP subfamily. As to quaternary structure, homohexamer. Dimer of a homotrimer.

The enzyme catalyses S-methyl-5'-thioadenosine + phosphate = 5-(methylsulfanyl)-alpha-D-ribose 1-phosphate + adenine. Its pathway is amino-acid biosynthesis; L-methionine biosynthesis via salvage pathway; S-methyl-5-thio-alpha-D-ribose 1-phosphate from S-methyl-5'-thioadenosine (phosphorylase route): step 1/1. Functionally, catalyzes the reversible phosphorylation of S-methyl-5'-thioadenosine (MTA) to adenine and 5-methylthioribose-1-phosphate. Involved in the breakdown of MTA, a major by-product of polyamine biosynthesis. Responsible for the first step in the methionine salvage pathway after MTA has been generated from S-adenosylmethionine. Has broad substrate specificity with 6-aminopurine nucleosides as preferred substrates. The protein is S-methyl-5'-thioadenosine phosphorylase of Pyrococcus furiosus (strain ATCC 43587 / DSM 3638 / JCM 8422 / Vc1).